Here is a 416-residue protein sequence, read N- to C-terminus: Serine hydroxymethyltransferase (416 aa).

Residues Leu118 and 122 to 124 each bind (6S)-5,6,7,8-tetrahydrofolate; that span reads GHL. N6-(pyridoxal phosphate)lysine is present on Lys227. (6S)-5,6,7,8-tetrahydrofolate is bound by residues Glu242 and 350–352; that span reads SPF.

It belongs to the SHMT family. As to quaternary structure, homodimer. Pyridoxal 5'-phosphate is required as a cofactor.

It localises to the cytoplasm. The enzyme catalyses (6R)-5,10-methylene-5,6,7,8-tetrahydrofolate + glycine + H2O = (6S)-5,6,7,8-tetrahydrofolate + L-serine. Its pathway is one-carbon metabolism; tetrahydrofolate interconversion. It functions in the pathway amino-acid biosynthesis; glycine biosynthesis; glycine from L-serine: step 1/1. Catalyzes the reversible interconversion of serine and glycine with tetrahydrofolate (THF) serving as the one-carbon carrier. This reaction serves as the major source of one-carbon groups required for the biosynthesis of purines, thymidylate, methionine, and other important biomolecules. Also exhibits THF-independent aldolase activity toward beta-hydroxyamino acids, producing glycine and aldehydes, via a retro-aldol mechanism. This is Serine hydroxymethyltransferase from Syntrophotalea carbinolica (strain DSM 2380 / NBRC 103641 / GraBd1) (Pelobacter carbinolicus).